The following is a 558-amino-acid chain: MSTVNLSNFIDMLRLGCKNIANNFEYINQLNVFPVPDGDTGTNMKVTLSEAFKKLESEISHIKSFSDLGKSFTRDLLLFSRGNSGVIFSQIMKGFFSDMISTKTATETELGIEDFATAFIKAEEVAYKNVSKPVEGTMLTVIRLISTDFKNQKNRAKTVQKLFEQVIKTAWQTVKKTPQMLPVLKASGVVDSGAYGFACFLEGMLSFYGEKATLNDGKLTSAELSQMTISGEKHVTEEEFGYCTEYVLKLGMSVSQEVEKQKFNQKKFESKVSKIATSVVVASDKDNGFVKVHAHTEKPNLLLELGLNYGEFELVKIENMNLQVAKQKPAPVKRNIKPAIVVTVPTEAFADRIREDYDIQAILCTDDTGAPSVFSLLEAVKLTHSSNIIFLLHDKNYFLSANEALKQLKHQKISADCVMTTNPIESLAALTVFNSDLNIHTNVKTMRRFVKGFASATITQASKKYKENRIEVNKGDFIAVANNSICVSEKELVQCVFNTIDHLLKKVKKPEFLLAYYGKDITAEEAEAMKEKIEKKYKLFCEFSPGEQKVFSYILGIQ.

One can recognise a DhaL domain in the interval 7–206; that stretch reads SNFIDMLRLG…FACFLEGMLS (200 aa).

This is an uncharacterized protein from Mycoplasma pneumoniae (strain ATCC 29342 / M129 / Subtype 1) (Mycoplasmoides pneumoniae).